A 333-amino-acid chain; its full sequence is Viral cathepsin (333 aa).

A signal peptide spans 1 to 20; sequence MTKLLNFVILASVLTVTAHA. Residues 21–124 constitute a propeptide, activation peptide; it reads LTYDLNNSDE…VIKDEPQALL (104 aa). Intrachain disulfides connect Cys-145–Cys-186, Cys-179–Cys-219, and Cys-272–Cys-321. Cys-148 is a catalytic residue. N-linked (GlcNAc...) asparagine; by host glycosylation occurs at Asn-170. Catalysis depends on residues His-280 and Asn-300.

Belongs to the peptidase C1 family. Post-translationally, synthesized as an inactive proenzyme and activated by proteolytic removal of the inhibitory propeptide.

It carries out the reaction Endopeptidase of broad specificity, hydrolyzing substrates of both cathepsin L and cathepsin B.. Cysteine protease that plays an essential role in host liquefaction to facilitate horizontal transmission of the virus. May participate in the degradation of foreign protein expressed by the baculovirus system. The sequence is that of Viral cathepsin (VCATH) from Cydia pomonella granulosis virus (isolate Mexico/1963) (CpGV).